A 453-amino-acid chain; its full sequence is Serine/threonine-protein phosphatase 2A regulatory subunit B'' subunit gamma (453 aa).

2 consecutive EF-hand domains span residues 273–308 and 341–376; these read PSAL…TMTN and KEPA…IQEL. Residues aspartate 286, aspartate 288, asparagine 290, methionine 292, and glutamate 297 each coordinate Ca(2+).

As to quaternary structure, interacts with MCM3AP/GANP. Interacts with PPP5C, and the phosphatase 2A core enzyme composed of the PPP2CA catalytic subunit and the constant regulatory subunit PPP2R1A. Finds in a complex with ABCB1, TFPI2 and PPP2R3C; leading to the dephosphorylation of ABCB1. Ubiquitously expressed in brain and other tissues.

The protein resides in the nucleus. The protein localises to the cytoplasm. May regulate MCM3AP phosphorylation through phosphatase recruitment. May act as a negative regulator of ABCB1 expression and function through the dephosphorylation of ABCB1 by TFPI2/PPP2R3C complex. May play a role in the activation-induced cell death of B-cells. This chain is Serine/threonine-protein phosphatase 2A regulatory subunit B'' subunit gamma (PPP2R3C), found in Homo sapiens (Human).